The primary structure comprises 351 residues: uncharacterized protein (351 aa).

Positions 25 to 67 (KKAETETLPPANSQPAAPAPEAKPTEAPVAKAEAKPETPAQPV) are disordered. A compositionally biased stretch (low complexity) spans 33 to 55 (PPANSQPAAPAPEAKPTEAPVAK).

This is an uncharacterized protein from Escherichia coli (strain K12).